The following is a 458-amino-acid chain: Argininosuccinate lyase (458 aa).

The protein belongs to the lyase 1 family. Argininosuccinate lyase subfamily.

The protein localises to the cytoplasm. The enzyme catalyses 2-(N(omega)-L-arginino)succinate = fumarate + L-arginine. It participates in amino-acid biosynthesis; L-arginine biosynthesis; L-arginine from L-ornithine and carbamoyl phosphate: step 3/3. This Glaesserella parasuis serovar 5 (strain SH0165) (Haemophilus parasuis) protein is Argininosuccinate lyase.